The primary structure comprises 867 residues: Transcription factor E2F8 (867 aa).

The disordered stretch occupies residues 38 to 58; it reads DFGPLTTPTKPKEGSQGEPWT. Residues Ser-71 and Ser-102 each carry the phosphoserine modification. 2 consecutive DNA-binding regions follow at residues 113–182 and 261–347; these read RKEK…TWHG and RKDK…KWTG. Disordered regions lie at residues 408–432, 532–616, and 771–800; these read RRKI…NSAP, QSVT…SGSK, and APEN…GQSV. A phosphoserine mark is found at Ser-413 and Ser-417. Polar residues-rich tracts occupy residues 413–432 and 532–556; these read SAPS…NSAP and QSVT…TGSK. The span at 557–567 shows a compositional bias: basic and acidic residues; that stretch reads DSTDATTEKAA. Over residues 568-579 the composition is skewed to polar residues; the sequence is NDTSKASASTRP. Residues 594-604 show a composition bias toward basic and acidic residues; it reads RTREPAGERGS. The span at 775 to 800 shows a compositional bias: polar residues; the sequence is AGTQQGRATNYDSPVPGQSQPNGQSV.

The protein belongs to the E2F/DP family. As to quaternary structure, homodimer and heterodimer: mainly forms homodimers and, to a lesser extent, heterodimers with E2F8. Dimerization is important for DNA-binding. Interacts with HIF1A.

The protein resides in the nucleus. Its function is as follows. Atypical E2F transcription factor that participates in various processes such as angiogenesis and polyploidization of specialized cells. Mainly acts as a transcription repressor that binds DNA independently of DP proteins and specifically recognizes the E2 recognition site 5'-TTTC[CG]CGC-3'. Directly represses transcription of classical E2F transcription factors such as E2F1: component of a feedback loop in S phase by repressing the expression of E2F1, thereby preventing p53/TP53-dependent apoptosis. Plays a key role in polyploidization of cells in placenta and liver by regulating the endocycle, probably by repressing genes promoting cytokinesis and antagonizing action of classical E2F proteins (E2F1, E2F2 and/or E2F3). Required for placental development by promoting polyploidization of trophoblast giant cells. Acts as a promoter of sprouting angiogenesis, possibly by acting as a transcription activator: associates with HIF1A, recognizes and binds the VEGFA promoter, which is different from canonical E2 recognition site, and activates expression of the VEGFA gene. The polypeptide is Transcription factor E2F8 (E2F8) (Homo sapiens (Human)).